The primary structure comprises 92 residues: Small ribosomal subunit protein uS19c (92 aa).

The protein belongs to the universal ribosomal protein uS19 family.

It localises to the plastid. Its subcellular location is the chloroplast. Functionally, protein S19 forms a complex with S13 that binds strongly to the 16S ribosomal RNA. The sequence is that of Small ribosomal subunit protein uS19c (rps19) from Guillardia theta (Cryptophyte).